The following is a 407-amino-acid chain: [Pyruvate dehydrogenase (acetyl-transferring)] kinase isozyme 2, mitochondrial (407 aa).

Residues 135–364 (LEYKDTYGDD…DAVIYLKALS (230 aa)) form the Histidine kinase domain. Phosphotyrosine occurs at positions 215 and 216. Residues 251–258 (ELFKNAMR), Asp-290, 309–310 (ST), and 325–330 (GFGYGL) contribute to the ATP site. Lys-376 is subject to N6-succinyllysine.

Belongs to the PDK/BCKDK protein kinase family. As to quaternary structure, homodimer, and heterodimer with PDK1. Interacts with the pyruvate dehydrogenase complex subunit DLAT, and is part of the multimeric pyruvate dehydrogenase complex that contains multiple copies of pyruvate dehydrogenase (E1), dihydrolipoamide acetyltransferase (DLAT, E2) and lipoamide dehydrogenase (DLD, E3). Detected in heart (at protein level).

It is found in the mitochondrion matrix. The enzyme catalyses L-seryl-[pyruvate dehydrogenase E1 alpha subunit] + ATP = O-phospho-L-seryl-[pyruvate dehydrogenase E1 alpha subunit] + ADP + H(+). Kinase that plays a key role in the regulation of glucose and fatty acid metabolism and homeostasis via phosphorylation of the pyruvate dehydrogenase subunits PDHA1 and PDHA2. This inhibits pyruvate dehydrogenase activity, and thereby regulates metabolite flux through the tricarboxylic acid cycle, down-regulates aerobic respiration and inhibits the formation of acetyl-coenzyme A from pyruvate. Inhibition of pyruvate dehydrogenase decreases glucose utilization and increases fat metabolism. Mediates cellular responses to insulin. Plays an important role in maintaining normal blood glucose levels and in metabolic adaptation to nutrient availability. Via its regulation of pyruvate dehydrogenase activity, plays an important role in maintaining normal blood pH and in preventing the accumulation of ketone bodies under starvation. Plays a role in the regulation of cell proliferation and in resistance to apoptosis under oxidative stress. Plays a role in p53/TP53-mediated apoptosis. This Mus musculus (Mouse) protein is [Pyruvate dehydrogenase (acetyl-transferring)] kinase isozyme 2, mitochondrial (Pdk2).